The primary structure comprises 873 residues: Leucine--tRNA ligase (873 aa).

The short motif at 42-52 (PYPSGKLHMGH) is the 'HIGH' region element. Positions 628–632 (KMSKS) match the 'KMSKS' region motif. Residue Lys-631 participates in ATP binding.

The protein belongs to the class-I aminoacyl-tRNA synthetase family.

It is found in the cytoplasm. The enzyme catalyses tRNA(Leu) + L-leucine + ATP = L-leucyl-tRNA(Leu) + AMP + diphosphate. The polypeptide is Leucine--tRNA ligase (Azoarcus sp. (strain BH72)).